Consider the following 67-residue polypeptide: DNA-directed RNA polymerase subunit omega (67 aa).

This sequence belongs to the RNA polymerase subunit omega family. In terms of assembly, the RNAP catalytic core consists of 2 alpha, 1 beta, 1 beta' and 1 omega subunit. When a sigma factor is associated with the core the holoenzyme is formed, which can initiate transcription.

It carries out the reaction RNA(n) + a ribonucleoside 5'-triphosphate = RNA(n+1) + diphosphate. Functionally, promotes RNA polymerase assembly. Latches the N- and C-terminal regions of the beta' subunit thereby facilitating its interaction with the beta and alpha subunits. The polypeptide is DNA-directed RNA polymerase subunit omega (Burkholderia ambifaria (strain ATCC BAA-244 / DSM 16087 / CCUG 44356 / LMG 19182 / AMMD) (Burkholderia cepacia (strain AMMD))).